The chain runs to 141 residues: Large ribosomal subunit protein uL16 (141 aa).

The tract at residues 1 to 23 (MLMPKRTKYRKQMKGRNRGKAHR) is disordered.

It belongs to the universal ribosomal protein uL16 family. Part of the 50S ribosomal subunit.

In terms of biological role, binds 23S rRNA and is also seen to make contacts with the A and possibly P site tRNAs. The polypeptide is Large ribosomal subunit protein uL16 (Helicobacter acinonychis (strain Sheeba)).